The following is a 214-amino-acid chain: Large ribosomal subunit protein uL3 (214 aa).

Q155 carries the N5-methylglutamine modification.

This sequence belongs to the universal ribosomal protein uL3 family. As to quaternary structure, part of the 50S ribosomal subunit. Forms a cluster with proteins L14 and L19. Methylated by PrmB.

Functionally, one of the primary rRNA binding proteins, it binds directly near the 3'-end of the 23S rRNA, where it nucleates assembly of the 50S subunit. The polypeptide is Large ribosomal subunit protein uL3 (Acinetobacter baumannii (strain ACICU)).